Reading from the N-terminus, the 138-residue chain is Large ribosomal subunit protein uL16 (138 aa).

Over residues 1–13 (MLQPKRRKYRKEQ) the composition is skewed to basic residues. Residues 1–20 (MLQPKRRKYRKEQKGRNTGI) are disordered.

It belongs to the universal ribosomal protein uL16 family. As to quaternary structure, part of the 50S ribosomal subunit.

In terms of biological role, binds 23S rRNA and is also seen to make contacts with the A and possibly P site tRNAs. The chain is Large ribosomal subunit protein uL16 from Ralstonia nicotianae (strain ATCC BAA-1114 / GMI1000) (Ralstonia solanacearum).